The primary structure comprises 87 residues: U3-theraphotoxin-Hhn1a 17 (87 aa).

The N-terminal stretch at 1-24 (MVNVKASMFLTFAGLVLLFVVCYA) is a signal peptide. Positions 25 to 52 (SESEEKEFPKEMLSSIFAVDNDFKQEER) are excised as a propeptide. 3 disulfide bridges follow: C54/C67, C61/C72, and C66/C79.

The protein belongs to the neurotoxin 10 (Hwtx-1) family. 51 (Hntx-8) subfamily. Hntx-8 sub-subfamily. As to expression, expressed by the venom gland.

It localises to the secreted. Functionally, ion channel inhibitor. The protein is U3-theraphotoxin-Hhn1a 17 of Cyriopagopus hainanus (Chinese bird spider).